A 153-amino-acid chain; its full sequence is UPF0260 protein YcgN (153 aa).

Belongs to the UPF0260 family.

In Salmonella paratyphi B (strain ATCC BAA-1250 / SPB7), this protein is UPF0260 protein YcgN.